The sequence spans 434 residues: Glutamyl-tRNA reductase (434 aa).

Residues 57–60, Ser116, 121–123, and Gln127 contribute to the substrate site; these read TCNR and ETQ. Cys58 functions as the Nucleophile in the catalytic mechanism. An NADP(+)-binding site is contributed by 196-201; the sequence is GAGEMI.

The protein belongs to the glutamyl-tRNA reductase family. Homodimer.

The enzyme catalyses (S)-4-amino-5-oxopentanoate + tRNA(Glu) + NADP(+) = L-glutamyl-tRNA(Glu) + NADPH + H(+). Its pathway is porphyrin-containing compound metabolism; protoporphyrin-IX biosynthesis; 5-aminolevulinate from L-glutamyl-tRNA(Glu): step 1/2. In terms of biological role, catalyzes the NADPH-dependent reduction of glutamyl-tRNA(Glu) to glutamate 1-semialdehyde (GSA). The polypeptide is Glutamyl-tRNA reductase (Burkholderia pseudomallei (strain 1106a)).